A 513-amino-acid polypeptide reads, in one-letter code: Putative ribose/galactose/methyl galactoside import ATP-binding protein 3 (513 aa).

ABC transporter domains are found at residues 15–252 and 263–508; these read IELT…VGRQ and TSAN…TQRE. Residue 47–54 coordinates ATP; that stretch reads GENGAGKS.

Belongs to the ABC transporter superfamily. Carbohydrate importer 2 (CUT2) (TC 3.A.1.2) family.

The protein localises to the cell inner membrane. The enzyme catalyses D-ribose(out) + ATP + H2O = D-ribose(in) + ADP + phosphate + H(+). The catalysed reaction is D-galactose(out) + ATP + H2O = D-galactose(in) + ADP + phosphate + H(+). Part of an ABC transporter complex involved in carbohydrate import. Could be involved in ribose, galactose and/or methyl galactoside import. Responsible for energy coupling to the transport system. In Burkholderia ambifaria (strain ATCC BAA-244 / DSM 16087 / CCUG 44356 / LMG 19182 / AMMD) (Burkholderia cepacia (strain AMMD)), this protein is Putative ribose/galactose/methyl galactoside import ATP-binding protein 3.